Here is a 325-residue protein sequence, read N- to C-terminus: tRNA(Ile)-lysidine synthase (325 aa).

Ser-34 to Ser-39 contributes to the ATP binding site.

Belongs to the tRNA(Ile)-lysidine synthase family.

Its subcellular location is the cytoplasm. The catalysed reaction is cytidine(34) in tRNA(Ile2) + L-lysine + ATP = lysidine(34) in tRNA(Ile2) + AMP + diphosphate + H(+). In terms of biological role, ligates lysine onto the cytidine present at position 34 of the AUA codon-specific tRNA(Ile) that contains the anticodon CAU, in an ATP-dependent manner. Cytidine is converted to lysidine, thus changing the amino acid specificity of the tRNA from methionine to isoleucine. In Rhodococcus jostii (strain RHA1), this protein is tRNA(Ile)-lysidine synthase.